The following is a 311-amino-acid chain: Methionyl-tRNA formyltransferase (311 aa).

112-115 (SLLP) contributes to the (6S)-5,6,7,8-tetrahydrofolate binding site.

The protein belongs to the Fmt family.

The catalysed reaction is L-methionyl-tRNA(fMet) + (6R)-10-formyltetrahydrofolate = N-formyl-L-methionyl-tRNA(fMet) + (6S)-5,6,7,8-tetrahydrofolate + H(+). In terms of biological role, attaches a formyl group to the free amino group of methionyl-tRNA(fMet). The formyl group appears to play a dual role in the initiator identity of N-formylmethionyl-tRNA by promoting its recognition by IF2 and preventing the misappropriation of this tRNA by the elongation apparatus. This Bradyrhizobium diazoefficiens (strain JCM 10833 / BCRC 13528 / IAM 13628 / NBRC 14792 / USDA 110) protein is Methionyl-tRNA formyltransferase.